Here is a 173-residue protein sequence, read N- to C-terminus: Crossover junction endodeoxyribonuclease RuvC (173 aa).

Residues aspartate 8, glutamate 67, and aspartate 139 contribute to the active site. Mg(2+) is bound by residues aspartate 8, glutamate 67, and aspartate 139.

The protein belongs to the RuvC family. Homodimer which binds Holliday junction (HJ) DNA. The HJ becomes 2-fold symmetrical on binding to RuvC with unstacked arms; it has a different conformation from HJ DNA in complex with RuvA. In the full resolvosome a probable DNA-RuvA(4)-RuvB(12)-RuvC(2) complex forms which resolves the HJ. Requires Mg(2+) as cofactor.

The protein resides in the cytoplasm. It catalyses the reaction Endonucleolytic cleavage at a junction such as a reciprocal single-stranded crossover between two homologous DNA duplexes (Holliday junction).. Functionally, the RuvA-RuvB-RuvC complex processes Holliday junction (HJ) DNA during genetic recombination and DNA repair. Endonuclease that resolves HJ intermediates. Cleaves cruciform DNA by making single-stranded nicks across the HJ at symmetrical positions within the homologous arms, yielding a 5'-phosphate and a 3'-hydroxyl group; requires a central core of homology in the junction. The consensus cleavage sequence is 5'-(A/T)TT(C/G)-3'. Cleavage occurs on the 3'-side of the TT dinucleotide at the point of strand exchange. HJ branch migration catalyzed by RuvA-RuvB allows RuvC to scan DNA until it finds its consensus sequence, where it cleaves and resolves the cruciform DNA. This Klebsiella pneumoniae (strain 342) protein is Crossover junction endodeoxyribonuclease RuvC.